Consider the following 959-residue polypeptide: Translation initiation factor IF-2 (959 aa).

Residues 1–10 show a composition bias toward basic and acidic residues; it reads MSDKTNDDKT. The disordered stretch occupies residues 1–374; the sequence is MSDKTNDDKT…SQMQETREKI (374 aa). A compositionally biased stretch (polar residues) spans 27-37; it reads EQSTVRQNFSH. Low complexity-rich tracts occupy residues 63–118 and 128–138; these read AAAA…VTKP and QRPGGQQAQRP. 2 stretches are compositionally biased toward basic and acidic residues: residues 154 to 225 and 232 to 241; these read SEMD…EAAK and ARSERRDDAR. Residues 246-284 are compositionally biased toward low complexity; it reads GARPQQAGRPQGGRPQPAGRPQQGSPRPAPIIADAAPIA. Basic and acidic residues predominate over residues 318–333; it reads PEVRAPKVVKGEDDRR. One can recognise a tr-type G domain in the interval 457–626; sequence SRPPVVTIMG…LLQAEMLDLK (170 aa). The tract at residues 466 to 473 is G1; it reads GHVDHGKT. 466–473 provides a ligand contact to GTP; sequence GHVDHGKT. A G2 region spans residues 491-495; the sequence is GITQH. Positions 512-515 are G3; it reads DTPG. Residues 512–516 and 566–569 each bind GTP; these read DTPGH and NKID. The segment at 566–569 is G4; that stretch reads NKID. Residues 602 to 604 form a G5 region; it reads SAK.

Belongs to the TRAFAC class translation factor GTPase superfamily. Classic translation factor GTPase family. IF-2 subfamily.

The protein localises to the cytoplasm. One of the essential components for the initiation of protein synthesis. Protects formylmethionyl-tRNA from spontaneous hydrolysis and promotes its binding to the 30S ribosomal subunits. Also involved in the hydrolysis of GTP during the formation of the 70S ribosomal complex. This chain is Translation initiation factor IF-2, found in Brucella suis biovar 1 (strain 1330).